Reading from the N-terminus, the 506-residue chain is MHIKADEISTIIKEQIQNYSQRIETTEVGTVLSVGDGIARVYGVQDVMSMELLEFPGNLLGMVLNLEQDNVGVALLGDDTGVEEGSTVKRTGRIFSVPVGDAVTGRVLNPLGQPLDGLGPLNATEKKPVEVKAPSIIDRKSIYEPLVTGIKAIDAMTPIGRGQRELIIGDRQTGKTSICIDAILAQKESGVHCFYVAIGQKASTVALVADTLRKHGAMEYTTIIAATASDPAPLQYISPYSGCTMAEYYRDHGQHALIVYDDLSKQAVAYRQMSLLLRRPPGREAFPGDVFYLHSRLLERAAKLSDELGGGSLTALPIIETQAGDVSAYIPTNVISITDGQVYLEPNLFNAGVRPAINVGLSVSRVGGAAQTKAMKQVSGTMRLDLAQYRELAAFAQFSSDLDKETQTKLERGARLVELLKQPQYQPMQLPEQVIVMFAATKGFMDDIPIDHIQNFSKTLIEYIQTMNPKILENISTQQALNEELDQQLTTAITECKKTFLPMNKR.

Residue 169 to 176 participates in ATP binding; the sequence is GDRQTGKT.

The protein belongs to the ATPase alpha/beta chains family. F-type ATPases have 2 components, CF(1) - the catalytic core - and CF(0) - the membrane proton channel. CF(1) has five subunits: alpha(3), beta(3), gamma(1), delta(1), epsilon(1). CF(0) has three main subunits: a(1), b(2) and c(9-12). The alpha and beta chains form an alternating ring which encloses part of the gamma chain. CF(1) is attached to CF(0) by a central stalk formed by the gamma and epsilon chains, while a peripheral stalk is formed by the delta and b chains.

It is found in the cell membrane. The enzyme catalyses ATP + H2O + 4 H(+)(in) = ADP + phosphate + 5 H(+)(out). Functionally, produces ATP from ADP in the presence of a proton gradient across the membrane. The alpha chain is a regulatory subunit. This Lawsonia intracellularis (strain PHE/MN1-00) protein is ATP synthase subunit alpha.